A 132-amino-acid chain; its full sequence is Agouti-signaling protein (132 aa).

The N-terminal stretch at 1 to 22 (MDVTXLLLATLLVFLCCFAAYS) is a signal peptide. A glycan (N-linked (GlcNAc...) asparagine) is linked at Asn-39. Positions 62-93 (ISRKEAENKRSSKKEASKQKVARPRTPLSVPC) are disordered. The span at 64-79 (RKEAENKRSSKKEASK) shows a compositional bias: basic and acidic residues. Intrachain disulfides connect Cys-93/Cys-108, Cys-100/Cys-114, Cys-107/Cys-125, Cys-111/Cys-132, and Cys-116/Cys-123. The Agouti domain maps to 93 to 132 (CVSTRGSCKPPAPACCHPCASCQCRFFRSACSCRVINVNC).

The protein resides in the secreted. In terms of biological role, involved in the regulation of melanogenesis. The binding of ASP to MC1R precludes alpha-MSH initiated signaling and thus blocks production of cAMP, leading to a down-regulation of eumelanogenesis (brown/black pigment) and thus increasing synthesis of pheomelanin (yellow/red pigment). This Leontopithecus chrysomelas (Golden-headed lion tamarin) protein is Agouti-signaling protein (ASIP).